A 490-amino-acid polypeptide reads, in one-letter code: Cytochrome P450 71B29 (490 aa).

The helical transmembrane segment at 1 to 21 threads the bilayer; that stretch reads MAIILCFLILLPLILIFLKKL. Cysteine 440 provides a ligand contact to heme.

Belongs to the cytochrome P450 family. Heme is required as a cofactor.

It localises to the membrane. The sequence is that of Cytochrome P450 71B29 (CYP71B29) from Arabidopsis thaliana (Mouse-ear cress).